A 200-amino-acid chain; its full sequence is Protein GrpE (200 aa).

It belongs to the GrpE family. Homodimer.

It is found in the cytoplasm. Functionally, participates actively in the response to hyperosmotic and heat shock by preventing the aggregation of stress-denatured proteins, in association with DnaK and GrpE. It is the nucleotide exchange factor for DnaK and may function as a thermosensor. Unfolded proteins bind initially to DnaJ; upon interaction with the DnaJ-bound protein, DnaK hydrolyzes its bound ATP, resulting in the formation of a stable complex. GrpE releases ADP from DnaK; ATP binding to DnaK triggers the release of the substrate protein, thus completing the reaction cycle. Several rounds of ATP-dependent interactions between DnaJ, DnaK and GrpE are required for fully efficient folding. The chain is Protein GrpE from Mycoplasma mycoides subsp. mycoides SC (strain CCUG 32753 / NCTC 10114 / PG1).